A 269-amino-acid polypeptide reads, in one-letter code: Integral membrane protein 2C (269 aa).

Threonine 39 is subject to Phosphothreonine. A helical; Signal-anchor for type II membrane protein transmembrane segment spans residues 57–77 (VGGVCYLSMGMVVLLMGLVFA). In terms of domain architecture, BRICHOS spans 138 to 232 (FGGGDPADII…LCNGKDTYRL (95 aa)). A disulfide bridge links cysteine 165 with cysteine 224. N-linked (GlcNAc...) asparagine glycosylation is present at asparagine 171.

The protein belongs to the ITM2 family. Interacts with BACE1. Interacts with APP. Interacts with STMN2. Post-translationally, type I membrane-bound, as well as soluble, furin has a pre-eminent role in ITM2C proteolytic processing. PCSK7 and PCSK5 may also be involved although to a lesser extent. The soluble form of PCSK7 is incapable of processing ITM2C. Fails to undergo shedding by ADAM10 and intramembrane cleavage by SPPL2B.

It is found in the lysosome membrane. It localises to the cell membrane. Negative regulator of amyloid-beta peptide production. May inhibit the processing of APP by blocking its access to alpha- and beta-secretase. Binding to the beta-secretase-cleaved APP C-terminal fragment is negligible, suggesting that ITM2C is a poor gamma-secretase cleavage inhibitor. May play a role in TNF-induced cell death and neuronal differentiation. This is Integral membrane protein 2C (Itm2c) from Mus musculus (Mouse).